The sequence spans 296 residues: 4-hydroxybenzoate octaprenyltransferase (296 aa).

The next 8 helical transmembrane spans lie at Ile-28–Ile-48, Leu-51–Ile-71, Leu-102–Leu-122, Phe-143–Phe-163, Ala-174–Met-194, Phe-212–Ala-232, Val-233–Leu-253, and Phe-274–Phe-294.

Belongs to the UbiA prenyltransferase family. Mg(2+) serves as cofactor.

Its subcellular location is the cell inner membrane. It catalyses the reaction all-trans-octaprenyl diphosphate + 4-hydroxybenzoate = 4-hydroxy-3-(all-trans-octaprenyl)benzoate + diphosphate. Its pathway is cofactor biosynthesis; ubiquinone biosynthesis. In terms of biological role, catalyzes the prenylation of para-hydroxybenzoate (PHB) with an all-trans polyprenyl group. Mediates the second step in the final reaction sequence of ubiquinone-8 (UQ-8) biosynthesis, which is the condensation of the polyisoprenoid side chain with PHB, generating the first membrane-bound Q intermediate 3-octaprenyl-4-hydroxybenzoate. The chain is 4-hydroxybenzoate octaprenyltransferase from Neisseria gonorrhoeae (strain NCCP11945).